The following is a 461-amino-acid chain: NADH-ubiquinone oxidoreductase chain 4 (461 aa).

The next 13 helical transmembrane spans lie at 20–42 (PAWL…LTWL), 61–81 (PLST…ILAS), 93–113 (QRSF…AFGA), 114–134 (TEII…LIII), 147–167 (GTYF…ALLM), 197–217 (WTAC…HLWL), 225–245 (PIAG…YGMM), 258–278 (LAYP…SICL), 285–304 (SLIA…GILT), 309–331 (GFTG…FCLA), 351–371 (VILP…LALP), 393–413 (TLTM…HMFL), and 436–456 (LLMT…ELIW).

The protein belongs to the complex I subunit 4 family.

It localises to the mitochondrion membrane. The enzyme catalyses a ubiquinone + NADH + 5 H(+)(in) = a ubiquinol + NAD(+) + 4 H(+)(out). Functionally, core subunit of the mitochondrial membrane respiratory chain NADH dehydrogenase (Complex I) that is believed to belong to the minimal assembly required for catalysis. Complex I functions in the transfer of electrons from NADH to the respiratory chain. The immediate electron acceptor for the enzyme is believed to be ubiquinone. The polypeptide is NADH-ubiquinone oxidoreductase chain 4 (MT-ND4) (Latimeria chalumnae (Coelacanth)).